The primary structure comprises 724 residues: Disks large homolog 4 (724 aa).

2 S-palmitoyl cysteine lipidation sites follow: Cys-3 and Cys-5. The tract at residues 15 to 35 (QDEDTPPLEHSPAHLPNQANS) is disordered. PDZ domains follow at residues 65-151 (EITL…VMRR) and 160-246 (EIKL…VAKP). Phosphoserine is present on residues Ser-73 and Ser-142. A Phosphotyrosine modification is found at Tyr-240. The residue at position 295 (Ser-295) is a Phosphoserine. The region spanning 313–393 (RIVIHRGSTG…QTVTIIAQYK (81 aa)) is the PDZ 3 domain. 2 positions are modified to phosphoserine: Ser-415 and Ser-418. Residue Thr-420 is modified to Phosphothreonine. 4 positions are modified to phosphoserine: Ser-422, Ser-425, Ser-449, and Ser-480. One can recognise an SH3 domain in the interval 428–498 (KRGFYIRALF…PSKRRVERRE (71 aa)). The Guanylate kinase-like domain maps to 534-709 (ARPIIILGPT…IYHKVKRVIE (176 aa)). Tyr-580 carries the phosphotyrosine modification. A phosphoserine mark is found at Ser-606 and Ser-654. Residue Tyr-715 is modified to Phosphotyrosine.

This sequence belongs to the MAGUK family. In terms of assembly, interacts through its PDZ domains with ANO2 and NETO1. Interacts through its first two PDZ domains with GRIN2A, GRIN2B, GRIN2C, GRIN2D. Interacts with ASIC3. Interacts with SEMA4C. Interacts with CXADR. Interacts with KCND2. Interacts with SYNGAP1. Interacts with LRRC4 and LRRC4B. Interacts with ERBB4. Interacts with KCNA1, KCNA2, KCNA3 and KCNA4. Interacts through its first PDZ domain with GRIK2, KCNA4 and CRIPT. Interacts through its second PDZ domain with the PDZ domain of NOS1 or the C-terminus of CAPON. Interacts through its third PDZ domain with NLGN1 and CRIPT, and probably with NLGN2 and NLGN3. Interacts through its guanylate kinase-like domain with KIF13B. Interacts through its guanylate kinase-like domain with DLGAP1/GKAP, DLGAP2, DLGAP3, DLGAP4, MAP1A, BEGAIN and SIPA1L1. Isoform 2 interacts through an L27 domain with HGS/HRS and the first L27 domain of CASK. Interacts with ADR1B and ANKS1B. May interact with HTR2A. Interacts with ADAM22. Interacts with KLHL17 and LGI1. Interacts with FRMPD4 (via C-terminus). Interacts with LRFN1, LRFN2 and LRFN4. Interacts (via N-terminal tandem pair of PDZ domains) with GPER1 (via C-terminus tail motif); the interaction is direct and induces the increase of GPER1 protein levels residing at the plasma membrane surface in a estradiol-independent manner. Interacts (via N-terminus tandem pair of PDZ domains) with NOS1 (via N-terminal domain). Interacts with SHANK3. Interacts with KCNJ4. Interacts with GPR85. Interacts with CACNG2 and MPP2 (via the SH3-Guanylate kinase-like sub-module). Interacts with ADGRB1. Found in a complex with PRR7 and GRIN1. Interacts (via PDZ3 domain and to lesser degree via PDZ2 domain) with PRR7. Component of the postsynaptic hippocampal AMPA-type glutamate receptor (AMPAR) complex, at least composed of pore forming AMPAR subunits GRIA1, GRIA2 and GRIA3 and AMPAR auxiliary proteins SHISA6 and SHISA7. Interacts (via its first two PDZ domains) with SHISA6 and SHISA7 (via PDZ-binding motif); the interaction is direct. Interacts with RPH3A and GRIN2A; this ternary complex regulates NMDA receptor composition at postsynaptic membranes. Interacts with ABR and BCR. Interacts with DGKI (via PDZ-binding motif); controls the localization of DGKI to the synapse. Interacts with C9orf72, SMCR8 and RAB39B. Interacts with ZDHHC5. Interacts with PTEN (via PDZ domain-binding motif); the interaction is induced by NMDA and is required for PTEN location at postsynaptic density. Found in a complex with GRIA1, GRIA2, GRIA3, GRIA4, CACNG8 and CNIH2. Interacts with FAM81A; the interaction facilitates condensate formation via liquid-liquid phase separation. Interacts with ADGRL3. Interacts with SORCS3. Palmitoylated. Palmitoylation is required for targeting to postsynaptic density, plasma membrane and synapses. Palmitoylation by ZDHHC2 occurs when the synaptic activity decreases and induces DLG4 synaptic clustering. Palmitoylation by ZDHHC15 regulates trafficking to the postsynaptic density and function in synaptogenesis. Palmitoylation may play a role in glutamate receptor GRIA1 synapse clustering. Depalmitoylated by ABHD17A and ABHD17B and to a lesser extent by ABHD17C, ABHD12, ABHD13, LYPLA1 and LYPLA2. Undergoes rapid synaptic palmitoylation/depalmitoylation cycles during neuronal development which slow down in mature neurons. Post-translationally, ubiquitinated by MDM2 in response to NMDA receptor activation, leading to proteasome-mediated degradation of DLG4 which is required for AMPA receptor endocytosis. As to expression, brain.

Its subcellular location is the cell membrane. It localises to the postsynaptic density. The protein resides in the synapse. The protein localises to the cytoplasm. It is found in the cell projection. Its subcellular location is the axon. It localises to the dendritic spine. The protein resides in the dendrite. The protein localises to the presynapse. In terms of biological role, postsynaptic scaffolding protein that plays a critical role in synaptogenesis and synaptic plasticity by providing a platform for the postsynaptic clustering of crucial synaptic proteins. Interacts with the cytoplasmic tail of NMDA receptor subunits and shaker-type potassium channels. Required for synaptic plasticity associated with NMDA receptor signaling. Overexpression or depletion of DLG4 changes the ratio of excitatory to inhibitory synapses in hippocampal neurons. May reduce the amplitude of ASIC3 acid-evoked currents by retaining the channel intracellularly. May regulate the intracellular trafficking of ADR1B. Also regulates AMPA-type glutamate receptor (AMPAR) immobilization at postsynaptic density keeping the channels in an activated state in the presence of glutamate and preventing synaptic depression. Under basal conditions, cooperates with FYN to stabilize palmitoyltransferase ZDHHC5 at the synaptic membrane through FYN-mediated phosphorylation of ZDHHC5 and its subsequent inhibition of association with endocytic proteins. The chain is Disks large homolog 4 from Homo sapiens (Human).